The primary structure comprises 486 residues: Mogroside I-E synthase (486 aa).

9 residues coordinate UDP-alpha-D-glucose: serine 302, cysteine 360, glutamine 362, tryptophan 380, asparagine 381, serine 382, glutamate 385, aspartate 401, and glutamine 402.

Belongs to the UDP-glycosyltransferase family. As to expression, highly expressed in young fruits 15 days after anthesis (15-DAA).

The catalysed reaction is mogrol + UDP-alpha-D-glucose = mogroside IE + UDP + H(+). It carries out the reaction mogroside I-A1 + UDP-alpha-D-glucose = mogroside IIE + UDP + H(+). It catalyses the reaction mogroside II-A1 + UDP-alpha-D-glucose = mogroside IIIX + UDP + H(+). The enzyme catalyses mogroside II-A + UDP-alpha-D-glucose = mogroside III + UDP + H(+). It participates in secondary metabolite biosynthesis; terpenoid biosynthesis. Functionally, UDP-glycosyltransferase involved in the biosynthesis of cucurbitacin and mogroside tetracyclic triterpene natural products (e.g. siamenoside I and mogrosides IV, V and VI). Cucurbitacins have cytotoxic properties and exhibit deterrent taste as a defense barrier against herbivores. Mogrosides are nonsugar highly oxygenated compounds used as high-intensity zero-calorie sweeteners; they also possess pharmacological properties such as regulating immunity, lowering blood sugar and lipid levels, protecting the liver, and acting as antioxidants and antitumor agents. Catalyzes the C3 primary glucosylation of mogrol, mogroside I-A1, mogroside II-A1 and mogroside II-A. In Siraitia grosvenorii (Monk's fruit), this protein is Mogroside I-E synthase.